Here is a 204-residue protein sequence, read N- to C-terminus: NAD(P)H dehydrogenase (quinone) FQR1 (204 aa).

A Flavodoxin-like domain is found at 5-192 (VYIVYYSMYG…QQAFHQGQYI (188 aa)). Residues 11–15 (SMYGH), 112–165 (IFYS…SPYG), and His136 each bind FMN. Tyr13 contacts NAD(+).

This sequence belongs to the WrbA family. The cofactor is FMN.

It localises to the cell membrane. It carries out the reaction a quinone + NADH + H(+) = a quinol + NAD(+). It catalyses the reaction a quinone + NADPH + H(+) = a quinol + NADP(+). Catalyzes the transfer of electrons from NADH and NADPH to several quinones in vitro. May act as detoxification enzyme, and protect against auxin-induced oxidative stress. The chain is NAD(P)H dehydrogenase (quinone) FQR1 from Arabidopsis thaliana (Mouse-ear cress).